Reading from the N-terminus, the 376-residue chain is UDP-4-amino-4,6-dideoxy-N-acetyl-beta-L-altrosamine transaminase (376 aa).

Residues Tyr-4, 24 to 27 (EILT), Ala-54, and Ser-176 contribute to the substrate site. The residue at position 181 (Lys-181) is an N6-(pyridoxal phosphate)lysine. Substrate contacts are provided by residues Asn-226 and 311 to 314 (QVHY).

The protein belongs to the DegT/DnrJ/EryC1 family.

The catalysed reaction is UDP-4-amino-4,6-dideoxy-N-acetyl-beta-L-altrosamine + 2-oxoglutarate = UDP-2-acetamido-2,6-dideoxy-beta-L-arabino-hex-4-ulose + L-glutamate. In terms of biological role, catalyzes the second step in the biosynthesis of pseudaminic acid, a sialic-acid-like sugar that is used to modify flagellin. Uses UDP-2-acetamido-2,6-dideoxy-beta-L-arabino-4-hexulose as substrate producing UDP-4-amino-4,6-dideoxy-beta-L-AltNAc. In Campylobacter jejuni subsp. jejuni serotype O:23/36 (strain 81-176), this protein is UDP-4-amino-4,6-dideoxy-N-acetyl-beta-L-altrosamine transaminase (pseC).